The primary structure comprises 230 residues: Large ribosomal subunit protein uL3 (230 aa).

Disordered stretches follow at residues 125–149 (QAIG…SLGD) and 210–230 (PNPK…VKNE).

It belongs to the universal ribosomal protein uL3 family. Part of the 50S ribosomal subunit. Forms a cluster with proteins L14 and L19.

Functionally, one of the primary rRNA binding proteins, it binds directly near the 3'-end of the 23S rRNA, where it nucleates assembly of the 50S subunit. In Mesomycoplasma hyopneumoniae (strain J / ATCC 25934 / NCTC 10110) (Mycoplasma hyopneumoniae), this protein is Large ribosomal subunit protein uL3.